We begin with the raw amino-acid sequence, 150 residues long: Large ribosomal subunit protein uL11 (150 aa).

A disordered region spans residues 83-111 (AAGLKPQGKRNRAKGSEKPGRQTAGTVTA).

It belongs to the universal ribosomal protein uL11 family. In terms of assembly, part of the ribosomal stalk of the 50S ribosomal subunit. Interacts with L10 and the large rRNA to form the base of the stalk. L10 forms an elongated spine to which L12 dimers bind in a sequential fashion forming a multimeric L10(L12)X complex. Post-translationally, one or more lysine residues are methylated.

Its function is as follows. Forms part of the ribosomal stalk which helps the ribosome interact with GTP-bound translation factors. The protein is Large ribosomal subunit protein uL11 of Paracoccus denitrificans (strain Pd 1222).